We begin with the raw amino-acid sequence, 209 residues long: Casparian strip membrane protein 1 (209 aa).

The interval 1-35 (MKTGESTAIDIAPETNNSGPIGKKKSTTPLLAAPV) is disordered. Topologically, residues 1-46 (MKTGESTAIDIAPETNNSGPIGKKKSTTPLLAAPVPDRGTHRMKRG) are cytoplasmic. The chain crosses the membrane as a helical span at residues 47 to 67 (LAIFDFVLRIGVLASALAAAA). Over 68–96 (AMGTSEQTLPFFTQFFQFEASYDDLPTFQ) the chain is Extracellular. The helical transmembrane segment at 97-117 (FFVVAMAVVAGYVVLSIPFSI) threads the bilayer. The Cytoplasmic portion of the chain corresponds to 118-129 (VCIIRPHAAGPR). A helical membrane pass occupies residues 130–150 (VLLLILDSVALTLNTAAAGAA). Over 151-182 (AAVVSLAHSGNSSTNWLAICNQFGDFCQQASG) the chain is Extracellular. N-linked (GlcNAc...) asparagine glycosylation is present at N161. Residues 183–203 (AVVGSFAAVLLFLLLILFSAL) form a helical membrane-spanning segment. Topologically, residues 204-209 (SLKNSH) are cytoplasmic.

Belongs to the Casparian strip membrane proteins (CASP) family. Homodimer and heterodimers.

The protein resides in the cell membrane. Functionally, regulates membrane-cell wall junctions and localized cell wall deposition. Required for establishment of the Casparian strip membrane domain (CSD) and the subsequent formation of Casparian strips, a cell wall modification of the root endodermis that determines an apoplastic barrier between the intraorganismal apoplasm and the extraorganismal apoplasm and prevents lateral diffusion. This is Casparian strip membrane protein 1 from Cucumis melo (Muskmelon).